A 116-amino-acid polypeptide reads, in one-letter code: MNAVAEMPSPIVFSDSAAMKVAELIEEEGNPDLKLRVFVQGGGCSGFQYGFTFDEIVNEDDTTMTKNGVQLLIDSMSYQYLVGAEIDYKDDLEGAQFVIKNPNATTTCGCGSSFSA.

Iron-sulfur cluster is bound by residues Cys44, Cys108, and Cys110.

Belongs to the HesB/IscA family. Homodimer. The cofactor is iron-sulfur cluster.

Functionally, required for insertion of 4Fe-4S clusters. This Janthinobacterium sp. (strain Marseille) (Minibacterium massiliensis) protein is Putative iron-sulfur cluster insertion protein ErpA.